The primary structure comprises 286 residues: 3-hydroxybutyryl-CoA dehydrogenase (286 aa).

This sequence belongs to the 3-hydroxyacyl-CoA dehydrogenase family.

The catalysed reaction is 3-hydroxybutanoyl-CoA + NAD(+) = acetoacetyl-CoA + NADH + H(+). It catalyses the reaction (3S)-3-hydroxybutanoyl-CoA + NADP(+) = acetoacetyl-CoA + NADPH + H(+). The protein operates within lipid metabolism; butanoate metabolism. This Mycobacterium tuberculosis (strain CDC 1551 / Oshkosh) protein is 3-hydroxybutyryl-CoA dehydrogenase (fadB2).